Here is a 233-residue protein sequence, read N- to C-terminus: UPF0725 protein At4g17990 (233 aa).

It belongs to the UPF0725 (EMB2204) family.

The polypeptide is UPF0725 protein At4g17990 (Arabidopsis thaliana (Mouse-ear cress)).